The chain runs to 329 residues: Malate dehydrogenase (329 aa).

12–18 provides a ligand contact to NAD(+); sequence GAAGQIG. Positions 93 and 99 each coordinate substrate. Residues asparagine 106, glutamine 113, and 130-132 contribute to the NAD(+) site; that span reads TGN. Substrate contacts are provided by asparagine 132 and arginine 163. Catalysis depends on histidine 188, which acts as the Proton acceptor.

It belongs to the LDH/MDH superfamily. MDH type 2 family.

The enzyme catalyses (S)-malate + NAD(+) = oxaloacetate + NADH + H(+). Catalyzes the reversible oxidation of malate to oxaloacetate. The chain is Malate dehydrogenase from Mycobacterium avium (strain 104).